Reading from the N-terminus, the 596-residue chain is DNA polymerase kappa (596 aa).

Positions 85–320 (CVCIDMDAYF…LPIRKVGGIG (236 aa)) constitute a UmuC domain. Positions 89 and 180 each coordinate Mg(2+). The active site involves Glu-181. A UBZ4-type zinc finger spans residues 516 to 545 (TRPCPICGTDVENRLDVMNCHVDECILKVQ). Cys-519, Cys-522, His-536, and Cys-540 together coordinate Zn(2+). Residues 559-584 (NKSTQKPERPSTKKRKLQEKRPKAKK) are disordered. Basic residues predominate over residues 570 to 584 (TKKRKLQEKRPKAKK).

This sequence belongs to the DNA polymerase type-Y family. It depends on Mg(2+) as a cofactor. Requires Mn(2+) as cofactor.

Its subcellular location is the nucleus. The catalysed reaction is DNA(n) + a 2'-deoxyribonucleoside 5'-triphosphate = DNA(n+1) + diphosphate. Its function is as follows. DNA polymerase specifically involved in DNA repair. Plays an important role in translesion synthesis, where the normal high-fidelity DNA polymerases cannot proceed and DNA synthesis stalls. Depending on the context, it inserts the correct base, but causes frequent base transitions, transversions and frameshifts. Lacks 3'-5' proofreading exonuclease activity. Forms a Schiff base with 5'-deoxyribose phosphate at abasic sites, but does not have lyase activity. In Caenorhabditis elegans, this protein is DNA polymerase kappa (polk-1).